The sequence spans 1136 residues: Receptor-type guanylate cyclase gcy-4 (1136 aa).

An N-terminal signal peptide occupies residues 1–21 (MRQLNYYIFISTILTYNLTHG). Residues 22 to 485 (QGPRPVIRVG…CPLPIFEQYR (464 aa)) lie on the Extracellular side of the membrane. N-linked (GlcNAc...) asparagine glycans are attached at residues Asn-40, Asn-194, Asn-252, Asn-351, Asn-377, Asn-386, and Asn-438. A helical membrane pass occupies residues 486 to 506 (ALVIVAIAVTILILLAIIICM). Over 507–1136 (SSKIRNRRVE…LRREMMRVEV (630 aa)) the chain is Cytoplasmic. In terms of domain architecture, Protein kinase spans 533 to 833 (LPMHRRASKS…EDNLMDHVFS (301 aa)). Residues 536 to 565 (HRRASKSSQESETESASETENFTSKSGDTM) form a disordered region. Positions 891–1021 (TVFFSDLVKF…DTVNTASRME (131 aa)) constitute a Guanylate cyclase domain.

The protein belongs to the adenylyl cyclase class-4/guanylyl cyclase family. In terms of tissue distribution, expression is biased toward ASE right (ASER) sensory neuron.

It localises to the cell membrane. It carries out the reaction GTP = 3',5'-cyclic GMP + diphosphate. Guanylate cyclase involved in the production of the second messenger cGMP. Regulates chemotaxis responses toward Br(1-) and I(1-) salt ions in ASE right (ASER) sensory neuron. In Caenorhabditis elegans, this protein is Receptor-type guanylate cyclase gcy-4.